The primary structure comprises 250 residues: uncharacterized protein (250 aa).

Residue Lys17 forms a Glycyl lysine isopeptide (Lys-Gly) (interchain with G-Cter in ubiquitin) linkage. The interval 30 to 67 (REEDYVATSKDNIHHHPCDWSAKPSQRQNENEQKSTIR) is disordered.

This is an uncharacterized protein from Saccharomyces cerevisiae (strain ATCC 204508 / S288c) (Baker's yeast).